Here is a 185-residue protein sequence, read N- to C-terminus: Probable NEDD8-conjugating enzyme Ubc12-like (185 aa).

The tract at residues 8–29 (KEKQREESQSNNGRGASTVKKQ) is disordered. Residues 16–28 (QSNNGRGASTVKK) are compositionally biased toward polar residues. The UBC core domain maps to 31–176 (AGELRLHKDI…VRRAMMGGQV (146 aa)). The Glycyl thioester intermediate role is filled by Cys-114.

This sequence belongs to the ubiquitin-conjugating enzyme family. UBC12 subfamily.

It participates in protein modification; protein neddylation. In terms of biological role, accepts the ubiquitin-like protein NEDD8/RUB1 from the ECR1-AXR1 E1 complex and catalyzes its covalent attachment to other proteins. This is Probable NEDD8-conjugating enzyme Ubc12-like (RCE2) from Arabidopsis thaliana (Mouse-ear cress).